The primary structure comprises 429 residues: Probable beta-1,3-galactosyl-O-glycosyl-glycoprotein beta-1,6-N-acetylglucosaminyltransferase 7 (429 aa).

The Cytoplasmic portion of the chain corresponds to 1 to 8 (MSQLRATK). The chain crosses the membrane as a helical; Signal-anchor for type II membrane protein span at residues 9 to 25 (PGILVCAAIGIFVFLYL). The Extracellular segment spans residues 26–429 (RNPTSEDPEE…ESHLNRRLNP (404 aa)). 4 cysteine pairs are disulfide-bonded: Cys53/Cys205, Cys139/Cys354, Cys160/Cys187, and Cys363/Cys394. Asn87 is a glycosylation site (N-linked (GlcNAc...) asparagine). Asn272 carries an N-linked (GlcNAc...) asparagine glycan.

It belongs to the glycosyltransferase 14 family.

It is found in the golgi apparatus membrane. Its pathway is protein modification; protein glycosylation. Its function is as follows. Probable glycosyltransferase. In Sus scrofa (Pig), this protein is Probable beta-1,3-galactosyl-O-glycosyl-glycoprotein beta-1,6-N-acetylglucosaminyltransferase 7.